A 392-amino-acid polypeptide reads, in one-letter code: MLRAGCRAALARRHLSSAPEGLKQTPLDALHRARGGRMVPFAGWSLPVQYGRGHLESHLHTRRHCSLFDVSHMLQTRVYGRDRVRFLESLVVGDIAELRPGQGTLTLLTNERGDIVDDLIVTNTAEDHLYVVSNAGCADKDRAVMEGRAAELRAAGGDVHLEVSGQRAAGVQGPSMAQVLQAGLPDDLTKLTFMTSTATTVFGVPGCRVTRCGYTGEDGVEISVPAGRAVELAERLLGCPEVWPAGLAARDSLRLEAGLCLYGNDIDESTTPVEAGLLWTLGKRRRTAMDFPGAAIIMEQVKEKPKRKRVGLTSVGPPLRPPAAILGPEGTPVGTVTSGCPSPSLGKNIAMGYVQAAHSRPGTTLTVEVRKKQHPALVTKMPFVPTHYYMAK.

The transit peptide at 1–16 (MLRAGCRAALARRHLS) directs the protein to the mitochondrion. E221, R250, and Y388 together coordinate substrate.

This sequence belongs to the GcvT family. In terms of assembly, the glycine cleavage system is composed of four proteins: P, T, L and H.

The protein resides in the mitochondrion. It catalyses the reaction N(6)-[(R)-S(8)-aminomethyldihydrolipoyl]-L-lysyl-[protein] + (6S)-5,6,7,8-tetrahydrofolate = N(6)-[(R)-dihydrolipoyl]-L-lysyl-[protein] + (6R)-5,10-methylene-5,6,7,8-tetrahydrofolate + NH4(+). Functionally, the glycine cleavage system catalyzes the degradation of glycine. The protein is Aminomethyltransferase, mitochondrial of Gallus gallus (Chicken).